The chain runs to 304 residues: Nod factor export ATP-binding protein I (304 aa).

The ABC transporter domain maps to 6 to 236 (IDFQQVEKRY…EIGCDVIEIY (231 aa)). 38 to 45 (GPNGAGKT) serves as a coordination point for ATP.

Belongs to the ABC transporter superfamily. Lipooligosaccharide exporter (TC 3.A.1.102) family. The complex is composed of two ATP-binding proteins (NodI) and two transmembrane proteins (NodJ).

It is found in the cell inner membrane. Part of the ABC transporter complex NodIJ involved in the export of the nodulation factors (Nod factors), the bacterial signal molecules that induce symbiosis and subsequent nodulation induction. Nod factors are LCO (lipo-chitin oligosaccharide), a modified beta-1,4-linked N-acetylglucosamine oligosaccharide. This subunit is responsible for energy coupling to the transport system. The chain is Nod factor export ATP-binding protein I from Burkholderia pseudomallei (strain K96243).